An 843-amino-acid polypeptide reads, in one-letter code: Glycogen phosphorylase, brain form (843 aa).

An N-acetylalanine modification is found at A2. Position 15 is a phosphoserine; by PHK; in form phosphorylase A (S15). D43, Y197, and R310 together coordinate AMP. Phosphotyrosine is present on Y197. The residue at position 473 (Y473) is a Phosphotyrosine. Residue K569 coordinates pyridoxal 5'-phosphate. The pyridoxal 5'-phosphate stretch occupies residues 677–678 (TG). N6-(pyridoxal phosphate)lysine is present on K681.

It belongs to the glycogen phosphorylase family. In terms of assembly, homodimer. Dimers associate into a tetramer to form the enzymatically active phosphorylase A. Requires pyridoxal 5'-phosphate as cofactor. Post-translationally, phosphorylated. Phosphorylation of Ser-15 converts phosphorylase B (unphosphorylated) to phosphorylase A.

It catalyses the reaction [(1-&gt;4)-alpha-D-glucosyl](n) + phosphate = [(1-&gt;4)-alpha-D-glucosyl](n-1) + alpha-D-glucose 1-phosphate. Activity of phosphorylase is controlled both by allosteric means (through the non-covalent binding of metabolites) and by covalent modification. Thus AMP allosterically activates, whereas ATP, ADP, and glucose-6-phosphate allosterically inhibit, phosphorylase B. Activated upon phosphorylation. Its function is as follows. Glycogen phosphorylase that regulates glycogen mobilization. Phosphorylase is an important allosteric enzyme in carbohydrate metabolism. Enzymes from different sources differ in their regulatory mechanisms and in their natural substrates. However, all known phosphorylases share catalytic and structural properties. This is Glycogen phosphorylase, brain form from Homo sapiens (Human).